Consider the following 172-residue polypeptide: Shikimate kinase (172 aa).

14–19 (GAGKST) provides a ligand contact to ATP. Ser18 contributes to the Mg(2+) binding site. Substrate contacts are provided by Asp36, Arg60, and Gly82. Arg120 is an ATP binding site. Arg139 provides a ligand contact to substrate. Gln156 is a binding site for ATP.

Belongs to the shikimate kinase family. In terms of assembly, monomer. Mg(2+) is required as a cofactor.

Its subcellular location is the cytoplasm. The catalysed reaction is shikimate + ATP = 3-phosphoshikimate + ADP + H(+). The protein operates within metabolic intermediate biosynthesis; chorismate biosynthesis; chorismate from D-erythrose 4-phosphate and phosphoenolpyruvate: step 5/7. Its function is as follows. Catalyzes the specific phosphorylation of the 3-hydroxyl group of shikimic acid using ATP as a cosubstrate. In Vibrio parahaemolyticus serotype O3:K6 (strain RIMD 2210633), this protein is Shikimate kinase.